The following is a 274-amino-acid chain: MSLQAVIEAAFERRAEITPKTVDVETRVAIETVIEKLDSGEYRVAEKIGGEWVTHQWLKKAVLLSFRINDNQIIDGAETKYYDKVALKFADYTESRFAEEGFRVVPSATVRKGAYIAKNCVLMPSYVNIGAYVGEGTMVDTWATVGSCAQIGKNVHLSGGVGIGGVLEPLQANPTIIGDNCFIGARSEVVEGVIVEEGCVISMGVFIGQSTRIYDRETGEIHYGRVPAGSVVVSGSLPSKCGKYSLYCAVIVKKVDAKTLGKVGINELLRTIEE.

The substrate site is built by arginine 103 and aspartate 140.

The protein belongs to the transferase hexapeptide repeat family. In terms of assembly, homotrimer.

Its subcellular location is the cytoplasm. The enzyme catalyses (S)-2,3,4,5-tetrahydrodipicolinate + succinyl-CoA + H2O = (S)-2-succinylamino-6-oxoheptanedioate + CoA. It participates in amino-acid biosynthesis; L-lysine biosynthesis via DAP pathway; LL-2,6-diaminopimelate from (S)-tetrahydrodipicolinate (succinylase route): step 1/3. The polypeptide is 2,3,4,5-tetrahydropyridine-2,6-dicarboxylate N-succinyltransferase (Haemophilus ducreyi (strain 35000HP / ATCC 700724)).